The chain runs to 147 residues: Protein disulfide isomerase-like 5-1 (147 aa).

Residues 1-29 (MDLAPGRRARLLVALALVVLVALAARSGA) form the signal peptide. One can recognise a Thioredoxin domain in the interval 30–137 (EVITLTEETF…LKNFVSDEAE (108 aa)). Residues Cys59 and Cys62 each act as nucleophile in the active site. Residues Cys59 and Cys62 are joined by a disulfide bond.

This sequence belongs to the protein disulfide isomerase family.

Functionally, acts as a protein-folding catalyst that interacts with nascent polypeptides to catalyze the formation, isomerization, and reduction or oxidation of disulfide bonds. May play a role in storage protein biogenesis. The sequence is that of Protein disulfide isomerase-like 5-1 (PDIL5-1) from Oryza sativa subsp. japonica (Rice).